A 106-amino-acid chain; its full sequence is uncharacterized protein (106 aa).

Its subcellular location is the mitochondrion. This is an uncharacterized protein from Arabidopsis thaliana (Mouse-ear cress).